A 726-amino-acid chain; its full sequence is Quinolinate synthase, chloroplastic (726 aa).

The N-terminal 67 residues, 1 to 67, are a transit peptide targeting the chloroplast; that stretch reads MDAANLVMKS…KKPSNNSTFT (67 aa). C133 acts as the Cysteine persulfide intermediate in catalysis. Iminosuccinate contacts are provided by H283 and S309. C363 contacts [4Fe-4S] cluster. Iminosuccinate contacts are provided by residues 392 to 394 and S414; that span reads YIN. C487 contributes to the [4Fe-4S] cluster binding site. Residues 513-515 and T538 contribute to the iminosuccinate site; that span reads HFE. C643 lines the [4Fe-4S] cluster pocket.

Belongs to the quinolinate synthase family. Type 1 subfamily. In terms of assembly, homodimer. [4Fe-4S] cluster is required as a cofactor.

It localises to the plastid. Its subcellular location is the chloroplast. It carries out the reaction iminosuccinate + dihydroxyacetone phosphate = quinolinate + phosphate + 2 H2O + H(+). The protein operates within alkaloid biosynthesis; nicotine biosynthesis. It functions in the pathway cofactor biosynthesis; NAD(+) biosynthesis; quinolinate from iminoaspartate: step 1/1. Involved in the biosynthesis of pyridine alkaloid natural products, leading mainly to the production of anabasine, anatabine, nicotine and nornicotine, effective deterrents against herbivores with antiparasitic and pesticide properties (neurotoxins); nornicotine serves as the precursor in the synthesis of the carcinogen compound N'-nitrosonornicotine (NNN). Catalyzes the condensation of iminoaspartate with dihydroxyacetone phosphate to form quinolinate. The protein is Quinolinate synthase, chloroplastic of Nicotiana tabacum (Common tobacco).